We begin with the raw amino-acid sequence, 155 residues long: Peptidyl-prolyl cis-trans isomerase ppi1 (155 aa).

The PPIase cyclophilin-type domain occupies 1-154; it reads MANVELQTSL…EPLKIIKAVA (154 aa).

The protein belongs to the cyclophilin-type PPIase family. PPIL1 subfamily. As to quaternary structure, interacts with cwf13/snw1.

It catalyses the reaction [protein]-peptidylproline (omega=180) = [protein]-peptidylproline (omega=0). PPIases accelerate the folding of proteins. It catalyzes the cis-trans isomerization of proline imidic peptide bonds in oligopeptides. The sequence is that of Peptidyl-prolyl cis-trans isomerase ppi1 (ppi1) from Schizosaccharomyces pombe (strain 972 / ATCC 24843) (Fission yeast).